Reading from the N-terminus, the 38-residue chain is Photosystem II reaction center protein L (38 aa).

The helical transmembrane segment at 17–37 (SLYWGLLLIFVLAVLFSNYFF) threads the bilayer.

This sequence belongs to the PsbL family. In terms of assembly, PSII is composed of 1 copy each of membrane proteins PsbA, PsbB, PsbC, PsbD, PsbE, PsbF, PsbH, PsbI, PsbJ, PsbK, PsbL, PsbM, PsbT, PsbX, PsbY, PsbZ, Psb30/Ycf12, at least 3 peripheral proteins of the oxygen-evolving complex and a large number of cofactors. It forms dimeric complexes.

Its subcellular location is the plastid. It is found in the chloroplast thylakoid membrane. One of the components of the core complex of photosystem II (PSII). PSII is a light-driven water:plastoquinone oxidoreductase that uses light energy to abstract electrons from H(2)O, generating O(2) and a proton gradient subsequently used for ATP formation. It consists of a core antenna complex that captures photons, and an electron transfer chain that converts photonic excitation into a charge separation. This subunit is found at the monomer-monomer interface and is required for correct PSII assembly and/or dimerization. The sequence is that of Photosystem II reaction center protein L from Angiopteris evecta (Mule's foot fern).